We begin with the raw amino-acid sequence, 127 residues long: Glycine cleavage system H protein (127 aa).

The 83-residue stretch at 22 to 104 (EVVIGITHFA…YEGAWMVKVE (83 aa)) folds into the Lipoyl-binding domain. Lys-63 is modified (N6-lipoyllysine).

Belongs to the GcvH family. In terms of assembly, the glycine cleavage system is composed of four proteins: P, T, L and H. (R)-lipoate serves as cofactor.

Functionally, the glycine cleavage system catalyzes the degradation of glycine. The H protein shuttles the methylamine group of glycine from the P protein to the T protein. Is also involved in protein lipoylation via its role as an octanoyl/lipoyl carrier protein intermediate. This is Glycine cleavage system H protein from Bacillus cereus (strain B4264).